A 1491-amino-acid polypeptide reads, in one-letter code: Chromosome partition protein MukB (1491 aa).

An ATP-binding site is contributed by 34-41 (GGNGAGKS). 6 coiled-coil regions span residues 302 to 418 (LIEQ…QYQQ), 488 to 600 (EVAR…RFES), 638 to 666 (ELEK…RLAS), 781 to 806 (RAAR…AKAS), 836 to 1109 (EQAL…DLRT), and 1210 to 1239 (VEAI…ISSD). The tract at residues 667–784 (PGGSNDPRLK…AIPLFGRAAR (118 aa)) is flexible hinge. The segment at 1059–1080 (QRRRDELQERLHTSRSRKSEYE) is disordered.

It belongs to the SMC family. MukB subfamily. As to quaternary structure, homodimerization via its hinge domain. Binds to DNA via its C-terminal region. Interacts, and probably forms a ternary complex, with MukE and MukF via its C-terminal region. The complex formation is stimulated by calcium or magnesium. Interacts with tubulin-related protein FtsZ.

It is found in the cytoplasm. Its subcellular location is the nucleoid. Its function is as follows. Plays a central role in chromosome condensation, segregation and cell cycle progression. Functions as a homodimer, which is essential for chromosome partition. Involved in negative DNA supercoiling in vivo, and by this means organize and compact chromosomes. May achieve or facilitate chromosome segregation by condensation DNA from both sides of a centrally located replisome during cell division. In Vibrio cholerae serotype O1 (strain ATCC 39541 / Classical Ogawa 395 / O395), this protein is Chromosome partition protein MukB.